The sequence spans 1008 residues: SKI family transcriptional corepressor 2 (1008 aa).

2 disordered regions span residues 280-315 (HLLG…DDDD) and 514-927 (EPGG…KKDV). 2 stretches are compositionally biased toward pro residues: residues 284-294 (APPPPPPPPPL) and 525-534 (APPPGQPPPV). 2 stretches are compositionally biased toward low complexity: residues 535-544 (VANGPGSGPP) and 578-595 (GVTS…SVGT). The segment covering 626–635 (GGKDDAESLA) has biased composition (basic and acidic residues). Positions 649-666 (PAHHHHHHHHPHHHHHHP) are enriched in basic residues. Residues 691–703 (APPPPPPPPPLAP) are compositionally biased toward pro residues. Acidic residues-rich tracts occupy residues 724 to 739 (DSSE…QEVD) and 748 to 766 (GEEE…EDEE). A compositionally biased stretch (basic and acidic residues) spans 787–797 (LSEKGSGRDRT). Over residues 842 to 855 (SSSGGSRPGSPVHH) the composition is skewed to low complexity. Basic and acidic residues-rich tracts occupy residues 856 to 872 (PSLE…KPKE), 880 to 890 (TKDDNFSDKNK), and 905 to 915 (FWRERSGEHTQ).

It belongs to the SKI family. In terms of assembly, interacts with SMAD2 and SMAD3. Expression is restricted to adult and embryonic central nervous system. Expressed at high levels in the developing cerebellum, ventral metencephalon and myelencephalon at 12.5 dpc (at protein level). In the adult cerebellum, expressed specifically in Purkinje cells.

It localises to the nucleus. Its subcellular location is the cytoplasm. In terms of biological role, acts as a TGF-beta antagonist in the nervous system. Exhibits transcriptional repressor activity. This Mus musculus (Mouse) protein is SKI family transcriptional corepressor 2.